The sequence spans 103 residues: Major carboxysome shell protein CsoS1 (103 aa).

Positions 9 to 94 (ALGMIETRGL…PHREVEPALG (86 aa)) constitute a BMC domain.

The protein belongs to the bacterial microcompartments protein family. CsoS1 subfamily. Homohexamer with a small central pore. A CsoS1-CsoS1D-CsoS2 complex can be isolated following expression in E.coli. Forms a CsoS2-CsoS1-RuBisCO complex.

The protein resides in the carboxysome. Functionally, the major shell protein of the carboxysome, a polyhedral inclusion where RuBisCO (ribulose bisphosphate carboxylase, ccbL-ccbS) is sequestered. Assembles into hexamers which make sheets that form the facets of the polyhedral carboxysome. There are estimated to be 538 CsoS1 hexamers per carboxysome; note this number includes the probable carboxysome shell vertex proteins CsoS4A and CsoS4B. The polypeptide is Major carboxysome shell protein CsoS1 (Prochlorococcus marinus subsp. pastoris (strain CCMP1986 / NIES-2087 / MED4)).